We begin with the raw amino-acid sequence, 300 residues long: Probable alpha-L-glutamate ligase (300 aa).

In terms of domain architecture, ATP-grasp spans 104–287 (LQLLARQGID…IAGRMIEYIE (184 aa)). Residues lysine 141, 178–179 (EY), aspartate 187, and 211–213 (RSN) each bind ATP. Aspartate 248, glutamate 260, and asparagine 262 together coordinate Mg(2+). Residues aspartate 248, glutamate 260, and asparagine 262 each coordinate Mn(2+).

The protein belongs to the RimK family. Mg(2+) serves as cofactor. Requires Mn(2+) as cofactor.

The sequence is that of Probable alpha-L-glutamate ligase from Serratia proteamaculans (strain 568).